Here is a 684-residue protein sequence, read N- to C-terminus: Macrolide export ATP-binding/permease protein MacB (684 aa).

Positions 2-243 constitute an ABC transporter domain; sequence IQLYGLRKDY…RSRLANSRAE (242 aa). Position 38–45 (38–45) interacts with ATP; the sequence is GSSGSGKT. 5 consecutive transmembrane segments (helical) span residues 248-268, 275-295, 563-583, 615-635, and 644-664; these read PASA…VLAL, TVLT…TMEL, LVIA…IMLV, VLCV…SVLV, and AMSI…GIVF.

The protein belongs to the ABC transporter superfamily. Macrolide exporter (TC 3.A.1.122) family. In terms of assembly, homodimer.

It is found in the cell inner membrane. Functionally, non-canonical ABC transporter that contains transmembrane domains (TMD), which form a pore in the inner membrane, and an ATP-binding domain (NBD), which is responsible for energy generation. Confers resistance against macrolides. The sequence is that of Macrolide export ATP-binding/permease protein MacB from Rhodopirellula baltica (strain DSM 10527 / NCIMB 13988 / SH1).